The primary structure comprises 171 residues: Ribosome maturation factor RimM (171 aa).

Residues Glu96–Leu168 form the PRC barrel domain.

Belongs to the RimM family. As to quaternary structure, binds ribosomal protein uS19.

The protein localises to the cytoplasm. An accessory protein needed during the final step in the assembly of 30S ribosomal subunit, possibly for assembly of the head region. Essential for efficient processing of 16S rRNA. May be needed both before and after RbfA during the maturation of 16S rRNA. It has affinity for free ribosomal 30S subunits but not for 70S ribosomes. In Corynebacterium glutamicum (strain ATCC 13032 / DSM 20300 / JCM 1318 / BCRC 11384 / CCUG 27702 / LMG 3730 / NBRC 12168 / NCIMB 10025 / NRRL B-2784 / 534), this protein is Ribosome maturation factor RimM.